We begin with the raw amino-acid sequence, 527 residues long: D-3-phosphoglycerate dehydrogenase (527 aa).

NAD(+) contacts are provided by residues 149 to 150 (RV), Asp-169, 228 to 230 (AAR), and Asp-254. Arg-230 is a catalytic residue. The active site involves Glu-259. His-278 acts as the Proton donor in catalysis. An NAD(+)-binding site is contributed by 278–281 (HIAA). The ACT domain maps to 453-527 (YIISLHEDKP…GIIDATYVEL (75 aa)).

Belongs to the D-isomer specific 2-hydroxyacid dehydrogenase family.

It carries out the reaction (2R)-3-phosphoglycerate + NAD(+) = 3-phosphooxypyruvate + NADH + H(+). It functions in the pathway amino-acid biosynthesis; L-serine biosynthesis; L-serine from 3-phospho-D-glycerate: step 1/3. The protein is D-3-phosphoglycerate dehydrogenase (serA) of Archaeoglobus fulgidus (strain ATCC 49558 / DSM 4304 / JCM 9628 / NBRC 100126 / VC-16).